The sequence spans 443 residues: 3-phosphoshikimate 1-carboxyvinyltransferase (443 aa).

Residues 1-25 (MSHSAEPLPMTARRSGPLTGEAQVP) form a disordered region. 3 residues coordinate 3-phosphoshikimate: lysine 28, serine 29, and arginine 33. Phosphoenolpyruvate is bound at residue lysine 28. Phosphoenolpyruvate contacts are provided by glycine 101 and arginine 129. Residues serine 174, glutamine 176, aspartate 326, and lysine 353 each contribute to the 3-phosphoshikimate site. Glutamine 176 lines the phosphoenolpyruvate pocket. The active-site Proton acceptor is the aspartate 326. The phosphoenolpyruvate site is built by arginine 357 and arginine 400.

Belongs to the EPSP synthase family. As to quaternary structure, monomer.

It localises to the cytoplasm. It carries out the reaction 3-phosphoshikimate + phosphoenolpyruvate = 5-O-(1-carboxyvinyl)-3-phosphoshikimate + phosphate. The protein operates within metabolic intermediate biosynthesis; chorismate biosynthesis; chorismate from D-erythrose 4-phosphate and phosphoenolpyruvate: step 6/7. In terms of biological role, catalyzes the transfer of the enolpyruvyl moiety of phosphoenolpyruvate (PEP) to the 5-hydroxyl of shikimate-3-phosphate (S3P) to produce enolpyruvyl shikimate-3-phosphate and inorganic phosphate. The chain is 3-phosphoshikimate 1-carboxyvinyltransferase from Paracoccus denitrificans (strain Pd 1222).